Here is a 135-residue protein sequence, read N- to C-terminus: Evasin P1134 (135 aa).

The first 31 residues, 1–31, serve as a signal peptide directing secretion; it reads MEVKTFAFLQIAVFIALGIQIFAAVTAAADA. 3 disulfides stabilise this stretch: cysteine 41-cysteine 63, cysteine 45-cysteine 65, and cysteine 56-cysteine 76. Asparagine 44 carries N-linked (GlcNAc...) asparagine glycosylation. Residues 88–112 are disordered; that stretch reads ETPSNSDLEAATPRPRKTLYPVRNP.

The protein localises to the secreted. In terms of biological role, salivary chemokine-binding protein which binds to host chemokine CXCL1. The polypeptide is Evasin P1134 (Ixodes ricinus (Common tick)).